Reading from the N-terminus, the 272-residue chain is Putative phosphoenolpyruvate synthase regulatory protein (272 aa).

152–159 (GVSRCGKT) is a binding site for ADP.

This sequence belongs to the pyruvate, phosphate/water dikinase regulatory protein family. PSRP subfamily.

It carries out the reaction [pyruvate, water dikinase] + ADP = [pyruvate, water dikinase]-phosphate + AMP + H(+). It catalyses the reaction [pyruvate, water dikinase]-phosphate + phosphate + H(+) = [pyruvate, water dikinase] + diphosphate. In terms of biological role, bifunctional serine/threonine kinase and phosphorylase involved in the regulation of the phosphoenolpyruvate synthase (PEPS) by catalyzing its phosphorylation/dephosphorylation. The polypeptide is Putative phosphoenolpyruvate synthase regulatory protein (Ectopseudomonas mendocina (strain ymp) (Pseudomonas mendocina)).